Consider the following 281-residue polypeptide: Arabinose operon regulatory protein (281 aa).

Alpha-L-arabinopyanose contacts are provided by proline 8, threonine 24, arginine 38, tyrosine 82, and histidine 93. Positions arginine 180 to glycine 279 constitute an HTH araC/xylS-type domain. DNA-binding regions (H-T-H motif) lie at residues alanine 198–leucine 219 and isoleucine 246–threonine 269.

Homodimer.

It is found in the cytoplasm. Transcription factor that regulates the expression of several genes involved in the transport and metabolism of L-arabinose. The chain is Arabinose operon regulatory protein from Salmonella typhimurium (strain LT2 / SGSC1412 / ATCC 700720).